The chain runs to 395 residues: GPI-anchor transamidase (395 aa).

The N-terminal stretch at 1–27 (MVDTCFLSRGLTTLAGLLLLPFGSLAA) is a signal peptide. The Lumenal portion of the chain corresponds to 28–368 (SQIEDQAEQF…PKLKDWHPPG (341 aa)). Residues D79, I82, E118, and D120 each contribute to the Ca(2+) site. H164 (proton donor) is an active-site residue. C206 (nucleophile; acyl-thioester intermediate) is an active-site residue. Residues C206, S232, and S234 each coordinate a protein. Positions 231–236 (DSLSHQ) are autoinhibitory loop. A disulfide bridge links C275 with C280. Residues 369–385 (GFILGLWALIIMVFFKT) traverse the membrane as a helical segment. Over 386 to 395 (YGIKHMKFIF) the chain is Cytoplasmic.

It belongs to the peptidase C13 family. As to quaternary structure, heteropentamer. Part of the GPI-anchor transamidase complex, consisting of PIGK, PIGT, PIGS, PIGU and GAA1. Interacts with GPAA1. Interacts with PIGT; this interaction, via a disulfide link, stabilizes the expression of GAA1 and PIGK and links them to PIGS. Post-translationally, the disulfide bond between PIGK/GPI8 and PIGT is important for normal enzyme activity.

The protein resides in the endoplasmic reticulum membrane. Its pathway is glycolipid biosynthesis; glycosylphosphatidylinositol-anchor biosynthesis. Its activity is regulated as follows. In the absence of proproteins substrates, exists in an inactive state with a disrupted catalytic site by an autoinhibitory loop. The binding of proprotein substrates, particularly the CSP region, to GPI-T triggers concerted conformational changes that alleviate the inhibition by the autoinhibitory loop. Meanwhile, proprotein residues near the omega- site induce the formation of a catalytic cleft for catalysis, following which the products are released and GPI-T reverts to the inactive state. In terms of biological role, catalytic subunit of the glycosylphosphatidylinositol-anchor (GPI-anchor) transamidase (GPI-T) complex that catalyzes the formation of the linkage between a proprotein and a GPI-anchor and participates in GPI anchored protein biosynthesis. Recognizes diverse proproteins at a C-terminal signal peptide (CSP) region that lacks consensus sequence and replaces it with a GPI-anchor via a transamidation reaction. Transamidation catalysis reaction follows a two-phase mechanism. In the acyl-enzyme phase, the carbonyl group of the proproteins's omega-site undergoes a nucleophilic attack forming an enzyme-substrate thioester bond. Followed by a general acid catalysis that allows CSP releasing, regenerating the carbonyl, and forming the acyl-enzyme intermediate. In the GPI-anchor attachment phase, the amino group of the GPI-anchor's ethanolamine phosphate, the one on third mannose (EtNP3), mediates a nucleophilic attack on the carbonyl of the acyl-enzyme intermediate, replacing the CSP, allowing GPI-anchor attachment to the omega-residue, therefore forming the product and freeing the enzyme. The chain is GPI-anchor transamidase from Bos taurus (Bovine).